Reading from the N-terminus, the 1018-residue chain is Isoleucine--tRNA ligase (1018 aa).

The short motif at Pro43 to Thr53 is the 'HIGH' region element. The short motif at Lys586–Ser590 is the 'KMSKS' region element. An ATP-binding site is contributed by Lys589.

It belongs to the class-I aminoacyl-tRNA synthetase family. IleS type 2 subfamily. Monomer. Requires Zn(2+) as cofactor.

The protein localises to the cytoplasm. It catalyses the reaction tRNA(Ile) + L-isoleucine + ATP = L-isoleucyl-tRNA(Ile) + AMP + diphosphate. In terms of biological role, catalyzes the attachment of isoleucine to tRNA(Ile). As IleRS can inadvertently accommodate and process structurally similar amino acids such as valine, to avoid such errors it has two additional distinct tRNA(Ile)-dependent editing activities. One activity is designated as 'pretransfer' editing and involves the hydrolysis of activated Val-AMP. The other activity is designated 'posttransfer' editing and involves deacylation of mischarged Val-tRNA(Ile). This chain is Isoleucine--tRNA ligase, found in Archaeoglobus fulgidus (strain ATCC 49558 / DSM 4304 / JCM 9628 / NBRC 100126 / VC-16).